The following is a 530-amino-acid chain: Histone-arginine methyltransferase CARMER (530 aa).

The region spanning 141-450 (ASQYFQFYGY…QSYDVTIDLH (310 aa)) is the SAM-dependent MTase PRMT-type domain. S-adenosyl-L-methionine contacts are provided by glutamine 154, arginine 163, glycine 187, glutamate 209, glutamate 238, and threonine 266. An Asymmetric dimethylarginine; by autocatalysis modification is found at arginine 501.

The protein belongs to the class I-like SAM-binding methyltransferase superfamily. Protein arginine N-methyltransferase family. In terms of assembly, homodimer. The dimethylated protein is the major form.

It is found in the cytoplasm. It localises to the nucleus. It carries out the reaction L-arginyl-[protein] + 2 S-adenosyl-L-methionine = N(omega),N(omega)-dimethyl-L-arginyl-[protein] + 2 S-adenosyl-L-homocysteine + 2 H(+). Methylates (mono- and asymmetric dimethylation) the guanidino nitrogens of arginyl residues in proteins. May methylate histone H3 at 'Arg-17' and activate transcription via chromatin remodeling. The polypeptide is Histone-arginine methyltransferase CARMER (Art4) (Drosophila sechellia (Fruit fly)).